The following is a 394-amino-acid chain: Protein-glutamate methylesterase/protein-glutamine glutaminase of group 2 operon (394 aa).

The region spanning 21–139 (RVMVVDDSAV…ELTGADTFKR (119 aa)) is the Response regulatory domain. 4-aspartylphosphate is present on Asp-72. The tract at residues 148 to 201 (LGAAARRSGPRREGTAAARPPGAAAQPTSGYTLPSPVRAKPETGPLTVRPLPPD) is disordered. The segment covering 162–172 (TAAARPPGAAA) has biased composition (low complexity). The CheB-type methylesterase domain maps to 200–382 (PDGRPDVIAI…SAILPLKEIG (183 aa)). Active-site residues include Ser-212, His-238, and Asp-334.

Belongs to the CheB family. Post-translationally, phosphorylated by CheA. Phosphorylation of the N-terminal regulatory domain activates the methylesterase activity.

It is found in the cytoplasm. It carries out the reaction [protein]-L-glutamate 5-O-methyl ester + H2O = L-glutamyl-[protein] + methanol + H(+). The enzyme catalyses L-glutaminyl-[protein] + H2O = L-glutamyl-[protein] + NH4(+). Functionally, involved in chemotaxis. Part of a chemotaxis signal transduction system that modulates chemotaxis in response to various stimuli. Catalyzes the demethylation of specific methylglutamate residues introduced into the chemoreceptors (methyl-accepting chemotaxis proteins or MCP) by CheR. Also mediates the irreversible deamidation of specific glutamine residues to glutamic acid. This Rhodospirillum centenum (strain ATCC 51521 / SW) protein is Protein-glutamate methylesterase/protein-glutamine glutaminase of group 2 operon.